Here is a 1025-residue protein sequence, read N- to C-terminus: Dihydropyrimidine dehydrogenase [NADP(+)] (1025 aa).

The 32-residue stretch at 69 to 100 folds into the 4Fe-4S ferredoxin-type 1 domain; sequence ERGALREAVRCLKCADAPCQKSCPTSLDIKSF. Residues C79, C82, C87, and C91 each contribute to the [4Fe-4S] cluster site. Residue V129 participates in FAD binding. Positions 130, 136, 140, and 156 each coordinate [4Fe-4S] cluster. FAD is bound by residues 194–198, 218–226, and R235; these read GAGPA and EKQEYVGGL. Residues 340–343, 364–365, and R371 each bind NADP(+); these read AGDT and RK. Position 384 is an N6-acetyllysine (K384). Residues 437–439 and 481–487 contribute to the NADP(+) site; these read PFG and DVVGMAN. 480–489 serves as a coordination point for FAD; it reads GDVVGMANTT. FMN contacts are provided by residues S550 and 574–575; that span reads KT. Substrate-binding positions include N609 and 668-670; that span reads NLS. C671 functions as the Proton acceptor in the catalytic mechanism. FMN is bound at residue K709. Residue 736–737 participates in substrate binding; it reads NT. Residues G767, 793 to 795, and 816 to 817 contribute to the FMN site; these read TGG and CS. S905 is modified (phosphoserine). 2 4Fe-4S ferredoxin-type domains span residues 944 to 976 and 978 to 1007; these read VVALIDEEMCINCGKCYMTCNDSGYQAIQFDPE and HLPTVSDTCTGCTLCLSVCPIMDCIRMVSR. The [4Fe-4S] cluster site is built by C953, C956, C959, C963, C986, C989, C992, and C996.

Belongs to the dihydropyrimidine dehydrogenase family. Homodimer. It depends on FAD as a cofactor. FMN is required as a cofactor. Requires [4Fe-4S] cluster as cofactor.

Its subcellular location is the cytoplasm. It catalyses the reaction 5,6-dihydrouracil + NADP(+) = uracil + NADPH + H(+). The catalysed reaction is 5,6-dihydrothymine + NADP(+) = thymine + NADPH + H(+). Its pathway is amino-acid biosynthesis; beta-alanine biosynthesis. Its activity is regulated as follows. Inactivated by 5-iodouracil. Functionally, involved in pyrimidine base degradation. Catalyzes the reduction of uracil and thymine. Also involved the degradation of the chemotherapeutic drug 5-fluorouracil. In Rattus norvegicus (Rat), this protein is Dihydropyrimidine dehydrogenase [NADP(+)].